The following is a 663-amino-acid chain: Innate immunity activator protein (663 aa).

Residues 1–68 form a disordered region; that stretch reads MLQMPKLNEI…RLPTQPGPGW (68 aa). The segment covering 40–50 has biased composition (low complexity); sequence RAQGQAGGARA. The stretch at 118-147 forms a coiled coil; that stretch reads AVHKQQRALEARLEACLEELRRLCLREAEL. A Nuclear localization signal (NLS) 1 motif is present at residues 164–170; the sequence is PKVRRRI. 3 disordered regions span residues 242–362, 378–425, and 444–493; these read RRRN…ASSL, VPGQ…PRRR, and PLPH…RHRG. Low complexity predominate over residues 259–272; it reads ELSASDDSSLSDGL. A compositionally biased stretch (pro residues) spans 282–298; it reads PKPPPESPAPPSRPLPP. Basic and acidic residues predominate over residues 327–340; sequence TSLDHPYEKPRKSS. Positions 332-338 match the Nuclear localization signal (NLS) 2 motif; the sequence is PYEKPRK. Polar residues predominate over residues 350 to 361; that stretch reads ATTPQDGPSASS. The Nuclear localization signal (NLS) 3 motif lies at 422 to 428; it reads PRRRPTH. Positions 455–475 are enriched in low complexity; the sequence is EDSGSDVSSISHPTSPGSSSP.

Interacts with IRAK1, NOD2 and RIPK2; the interaction takes place upon PRR stimulation. Interacts with YWHAQ/14-3-3T; the interaction increases upon PRR stimulation and is required for cellular signaling pathway activation and cytokine secretion. Interacts (via N-terminal domain) with CYTH1 and CYTH2 (via their N-terminal domains). Interacts with FBXW11 and BTRC; associates with SCF E3 ubiquitin-protein ligase complexes. As to expression, highly expressed in intestinal myeloid-derived cells and expressed in monocyte-derived macrophages upon induction by PRR activation.

It localises to the nucleus. The protein resides in the cytoplasm. In terms of biological role, expressed in peripheral macrophages and intestinal myeloid-derived cells, is required for optimal PRR (pattern recognition receptor)-induced signaling, cytokine secretion, and bacterial clearance. Upon stimulation of a broad range of PRRs (pattern recognition receptor) such as NOD2 or TLR2, TLR3, TLR4, TLR5, TLR7 and TLR9, associates with YWHAQ/14-3-3T, which in turn leads to the recruitment and activation of MAP kinases and NF-kappa-B signaling complexes that amplifies PRR-induced downstream signals and cytokine secretion. In the intestine, regulates adherens junction stability by regulating the degradation of CYTH1 and CYTH2, probably acting as substrate cofactor for SCF E3 ubiquitin-protein ligase complexes. Stabilizes adherens junctions by limiting CYTH1-dependent ARF6 activation. The chain is Innate immunity activator protein from Homo sapiens (Human).